The following is a 180-amino-acid chain: Crossover junction endodeoxyribonuclease RuvC (180 aa).

Catalysis depends on residues Asp-7, Glu-66, and Asp-138. Asp-7, Glu-66, and Asp-138 together coordinate Mg(2+).

The protein belongs to the RuvC family. As to quaternary structure, homodimer which binds Holliday junction (HJ) DNA. The HJ becomes 2-fold symmetrical on binding to RuvC with unstacked arms; it has a different conformation from HJ DNA in complex with RuvA. In the full resolvosome a probable DNA-RuvA(4)-RuvB(12)-RuvC(2) complex forms which resolves the HJ. Mg(2+) serves as cofactor.

The protein resides in the cytoplasm. It carries out the reaction Endonucleolytic cleavage at a junction such as a reciprocal single-stranded crossover between two homologous DNA duplexes (Holliday junction).. Its function is as follows. The RuvA-RuvB-RuvC complex processes Holliday junction (HJ) DNA during genetic recombination and DNA repair. Endonuclease that resolves HJ intermediates. Cleaves cruciform DNA by making single-stranded nicks across the HJ at symmetrical positions within the homologous arms, yielding a 5'-phosphate and a 3'-hydroxyl group; requires a central core of homology in the junction. The consensus cleavage sequence is 5'-(A/T)TT(C/G)-3'. Cleavage occurs on the 3'-side of the TT dinucleotide at the point of strand exchange. HJ branch migration catalyzed by RuvA-RuvB allows RuvC to scan DNA until it finds its consensus sequence, where it cleaves and resolves the cruciform DNA. The sequence is that of Crossover junction endodeoxyribonuclease RuvC from Burkholderia lata (strain ATCC 17760 / DSM 23089 / LMG 22485 / NCIMB 9086 / R18194 / 383).